We begin with the raw amino-acid sequence, 582 residues long: La-related protein 7 (582 aa).

M1 carries the N-acetylmethionine modification. The segment at 1 to 27 (METESGNQEKVMEEESTEKKKEVEKKK) is disordered. The span at 10 to 25 (KVMEEESTEKKKEVEK) shows a compositional bias: basic and acidic residues. Residues 28 to 122 (RSRVKQVLAD…KPLGERPKDE (95 aa)) form the HTH La-type RNA-binding domain. The RRM domain maps to 125–203 (RTVYVELLPK…PRKPGIFPKT (79 aa)). Disordered stretches follow at residues 188 to 368 (NPPE…ERHK) and 410 to 442 (KSES…RTQE). Over residues 219–228 (KKKKKKKGRM) the composition is skewed to basic residues. Residues 229–240 (KKEDNIQAKEEN) are compositionally biased toward basic and acidic residues. K237 participates in a covalent cross-link: Glycyl lysine isopeptide (Lys-Gly) (interchain with G-Cter in SUMO2). A Phosphothreonine modification is found at T257. S258, S261, S273, S298, S299, and S300 each carry phosphoserine. A compositionally biased stretch (basic and acidic residues) spans 316–335 (IQKDIIKEASEASKENRDIE). Position 337 is a phosphoserine (S337). T338 is modified (phosphothreonine). Residue S351 is modified to Phosphoserine. Basic residues predominate over residues 354–367 (KTKRKHKKKHKERH). K410 is covalently cross-linked (Glycyl lysine isopeptide (Lys-Gly) (interchain with G-Cter in SUMO2)). Residues 428–442 (KNEKTANREECRTQE) are compositionally biased toward basic and acidic residues. A xRRM domain is found at 450-563 (QFVSGVIVKI…TEKLITKAEK (114 aa)).

Belongs to the LARP7 family. In terms of assembly, core component of the 7SK RNP complex, at least composed of 7SK RNA, LARP7, MEPCE, HEXIM1 (or HEXIM2) and P-TEFb (composed of CDK9 and CCNT1/cyclin-T1). Interacts with METTL16. Interacts with RBM7; upon genotoxic stress this interaction is enhanced, triggering the release of inactive P-TEFb complex from the core, yielding to P-TEFb complex activation. Associates with box C/D small nucleolar ribonucleoprotein (snoRNP) complexes.

The protein localises to the nucleus. Its subcellular location is the nucleoplasm. RNA-binding protein that specifically binds distinct small nuclear RNA (snRNAs) and regulates their processing and function. Specifically binds the 7SK snRNA (7SK RNA) and acts as a core component of the 7SK ribonucleoprotein (RNP) complex, thereby acting as a negative regulator of transcription elongation by RNA polymerase II. The 7SK RNP complex sequesters the positive transcription elongation factor b (P-TEFb) in a large inactive 7SK RNP complex preventing RNA polymerase II phosphorylation and subsequent transcriptional elongation. The 7SK RNP complex also promotes snRNA gene transcription by RNA polymerase II via interaction with the little elongation complex (LEC). LARP7 specifically binds to the highly conserved 3'-terminal U-rich stretch of 7SK RNA; on stimulation, remains associated with 7SK RNA, whereas P-TEFb is released from the complex. LARP7 also acts as a regulator of mRNA splicing fidelity by promoting U6 snRNA processing. Specifically binds U6 snRNAs and associates with a subset of box C/D RNP complexes: promotes U6 snRNA 2'-O-methylation by facilitating U6 snRNA loading into box C/D RNP complexes. U6 snRNA 2'-O-methylation is required for mRNA splicing fidelity. Binds U6 snRNAs with a 5'-CAGGG-3' sequence motif. U6 snRNA processing is required for spermatogenesis. This chain is La-related protein 7, found in Homo sapiens (Human).